The primary structure comprises 81 residues: Antitoxin VapB28 (81 aa).

In terms of biological role, antitoxin component of a type II toxin-antitoxin (TA) system. This is Antitoxin VapB28 (vapB28) from Mycobacterium tuberculosis (strain CDC 1551 / Oshkosh).